Reading from the N-terminus, the 268-residue chain is MAGELRIMENKSREDINLSPVSKIEIYSFFDPFSSDCFKLSAILSKLRIEYNQYIRIRHILNPSLKVLTKCQAQSTSNFDNIALAYKAAELQGRVRVERFIHLMQNEIIPKRDIITESMICDCIQNAGIDLEVFKDDLQKSKLTESLKIDLHIAREMEIEQAPSLVFFSEDVHEEGLKVEGLYPYHIYTYIINELMGKPIEKNLPPKLETYIQQQQLVTMEELLTIYEWPEKLLNKELKKLAIQQKIEKLKYPDGDFWKSKMPKIKSK.

The protein belongs to the SpxH family. Interacts with Spx.

It is found in the cytoplasm. Adapter protein required for efficient degradation of Spx by ClpXP under non-stress conditions. Interaction with Spx stabilizes Spx and exposes the C-terminus of Spx for recognition and proteolysis by ClpXP. The chain is ClpXP adapter protein SpxH from Staphylococcus aureus (strain COL).